The sequence spans 416 residues: MKAISVLGSTGSIGTQTLAIVEDFPDQFRVVALSAGRNLSLLVSQIQRHRPDVVALADQALLAELKDRLMALPADTRPEPLPHLVGGPEGLDVVASWDSADLVVTGIVGCAGLLPTLAAIRAGKDLAVANKETLIAAGPVVLPELKKSGSRLLPADSEHSAIFQCLQGTPWSDTARLSTGVPTPGLRRIQLTASGGAFRDWSAADLEKATVADATSHPNWSMGKKITVDSASLMNKGLEVIEAHYLFGLDYDHIEIVIHPQSIIHSMVELADSSVLAQLGWPDMKLPILYCMSWPSRLETPWRRLDLTEVGQLSFRAPDPAKYPCMDLAYAAGRAGGTMPAVLNAANEEAVAQFLEEKIHFLDIPKMIEGACEQHKPDLAANPCLDDVLAVDQWARQAVREQVNRGTRLRGASMAA.

Residues Thr10, Gly11, Ser12, Ile13, Gly36, Arg37, Asn38, and Asn130 each contribute to the NADPH site. A 1-deoxy-D-xylulose 5-phosphate-binding site is contributed by Lys131. Glu132 is an NADPH binding site. Residue Asp156 coordinates Mn(2+). 4 residues coordinate 1-deoxy-D-xylulose 5-phosphate: Ser157, Glu158, Ser194, and His217. Residue Glu158 coordinates Mn(2+). Residue Gly223 coordinates NADPH. 1-deoxy-D-xylulose 5-phosphate-binding residues include Ser230, Asn235, Lys236, and Glu239. Mn(2+) is bound at residue Glu239.

Belongs to the DXR family. It depends on Mg(2+) as a cofactor. Requires Mn(2+) as cofactor.

The catalysed reaction is 2-C-methyl-D-erythritol 4-phosphate + NADP(+) = 1-deoxy-D-xylulose 5-phosphate + NADPH + H(+). The protein operates within isoprenoid biosynthesis; isopentenyl diphosphate biosynthesis via DXP pathway; isopentenyl diphosphate from 1-deoxy-D-xylulose 5-phosphate: step 1/6. In terms of biological role, catalyzes the NADPH-dependent rearrangement and reduction of 1-deoxy-D-xylulose-5-phosphate (DXP) to 2-C-methyl-D-erythritol 4-phosphate (MEP). This chain is 1-deoxy-D-xylulose 5-phosphate reductoisomerase, found in Synechococcus sp. (strain CC9311).